We begin with the raw amino-acid sequence, 236 residues long: Cyclin-P3-1 (236 aa).

This sequence belongs to the cyclin family. Cyclin U/P subfamily.

In Oryza sativa subsp. japonica (Rice), this protein is Cyclin-P3-1 (CYCP3-1).